We begin with the raw amino-acid sequence, 520 residues long: Intermediate filament protein ON3 (520 aa).

Low complexity predominate over residues methionine 1–serine 27. Positions methionine 1 to valine 33 are disordered. The segment at methionine 1–glutamine 108 is head. The tract at residues glutamate 109 to leucine 144 is coil 1A. Residues glutamate 109 to leucine 420 form the IF rod domain. Residues glutamine 145–methionine 157 form a linker 1 region. Residues phenylalanine 158 to leucine 253 form a coil 1B region. Residues glutamine 254–aspartate 273 form a linker 12 region. A coil 2 region spans residues methionine 274–leucine 420. The tail stretch occupies residues leucine 421–aspartate 520.

This sequence belongs to the intermediate filament family.

One of the non-neuronal predominant intermediate filament proteins of the visual pathway. The protein is Intermediate filament protein ON3 of Carassius auratus (Goldfish).